The following is a 905-amino-acid chain: Heme/hemopexin-binding protein (905 aa).

The N-terminal stretch at 1–21 is a signal peptide; that stretch reads MYKLNVISLIILTTYTGATYA.

The protein localises to the secreted. Functionally, binds heme/hemopexin complexes. The sequence is that of Heme/hemopexin-binding protein (hxuA) from Haemophilus influenzae (strain ATCC 51907 / DSM 11121 / KW20 / Rd).